The chain runs to 458 residues: Zinc finger protein 239 (458 aa).

Lysine 108 is covalently cross-linked (Glycyl lysine isopeptide (Lys-Gly) (interchain with G-Cter in SUMO2)). At serine 191 the chain carries Phosphoserine. 9 C2H2-type zinc fingers span residues 207–229, 235–257, 263–285, 291–313, 319–341, 347–369, 375–397, 403–425, and 431–453; these read YECS…QRDH, YKCE…QAVH, YKCD…HAVH, YKCD…QRVH, YECE…QRVH, YKCG…RCIH, YQCY…LRVH, YHCG…QRVH, and YECS…QRVH.

Belongs to the krueppel C2H2-type zinc-finger protein family.

It localises to the nucleus. Its function is as follows. May be involved in transcriptional regulation. The protein is Zinc finger protein 239 (ZNF239) of Homo sapiens (Human).